A 621-amino-acid chain; its full sequence is Chaperone protein HtpG (621 aa).

Residues 1 to 328 form an a; substrate-binding region; that stretch reads MKQEKKKFDA…SEDLPLNISR (328 aa). The b stretch occupies residues 329-544; sequence ESLQHNNVLE…EAAMDIRMER (216 aa). The segment at 479–498 is disordered; that stretch reads VDQATSSSEEKNKDDKKSDD. The span at 486–498 shows a compositional bias: basic and acidic residues; the sequence is SEEKNKDDKKSDD. The segment at 545–621 is c; the sequence is FLIEQKQIAN…LNDIVQKAIL (77 aa).

It belongs to the heat shock protein 90 family. Homodimer.

The protein resides in the cytoplasm. In terms of biological role, molecular chaperone. Has ATPase activity. The protein is Chaperone protein HtpG of Rickettsia bellii (strain OSU 85-389).